The chain runs to 159 residues: Ribosomal RNA large subunit methyltransferase H (159 aa).

S-adenosyl-L-methionine is bound by residues L76, G108, and 127-132; that span reads FGRLTL.

Belongs to the RNA methyltransferase RlmH family. Homodimer.

The protein localises to the cytoplasm. The enzyme catalyses pseudouridine(1915) in 23S rRNA + S-adenosyl-L-methionine = N(3)-methylpseudouridine(1915) in 23S rRNA + S-adenosyl-L-homocysteine + H(+). Functionally, specifically methylates the pseudouridine at position 1915 (m3Psi1915) in 23S rRNA. The polypeptide is Ribosomal RNA large subunit methyltransferase H (Listeria welshimeri serovar 6b (strain ATCC 35897 / DSM 20650 / CCUG 15529 / CIP 8149 / NCTC 11857 / SLCC 5334 / V8)).